The sequence spans 526 residues: Arp2/3 complex-activating protein rickA (526 aa).

Residues 305–356 are disordered; it reads TTSSIAKPLENNVTPPPPLTKNNIPPPPPPPPLSKNNILPPPPPPMPTMAPA. Positions 318–352 are enriched in pro residues; that stretch reads TPPPPLTKNNIPPPPPPPPLSKNNILPPPPPPMPT. WH2 domains follow at residues 383–400 and 410–427; these read DTSD…LRKV and SRDL…LRKV. Disordered stretches follow at residues 425-452 and 464-526; these read RKVE…SKPN and MEMS…FVRS. Residues 448-484 form a central and acidic domains region; sequence VSKPNGVASILARRVAMEMSDSSSSSGSESDSGNWSD. Positions 464–480 are enriched in low complexity; it reads MEMSDSSSSSGSESDSG. Polar residues-rich tracts occupy residues 481-491 and 506-526; these read NWSDASVNSNK and TTHA…FVRS.

In terms of assembly, homodimer.

It is found in the cell surface. Functionally, recruits and activates the Arp2/3 complex, which in turn leads to actin polymerization, promoting Rickettsia motility during infection. This Rickettsia felis (strain ATCC VR-1525 / URRWXCal2) (Rickettsia azadi) protein is Arp2/3 complex-activating protein rickA (rickA).